Here is a 295-residue protein sequence, read N- to C-terminus: Small ribosomal subunit protein uS2 (295 aa).

N-acetylserine is present on serine 2. Serine 43 carries the phosphoserine modification. At lysine 52 the chain carries N6-acetyllysine. Positions 54–113 are interaction with PPP1R16B; it reads TWEKLLLAARAIVAIENPADVSVISSRNTGQRAVLKFAAATGATPIAGRFTPGTFTNQIQ. The residue at position 89 (lysine 89) is an N6-acetyllysine; alternate. A Glycyl lysine isopeptide (Lys-Gly) (interchain with G-Cter in SUMO2); alternate cross-link involves residue lysine 89. Threonine 97 carries the post-translational modification Phosphothreonine. Laminin-binding regions lie at residues 161-180 and 205-229; these read IPCN…MLAR and RDPE…EFQG. 5 [DE]-W-[ST] repeats span residues 230–232, 247–249, 266–268, 275–277, and 293–295; these read EWT, DWS, and EWS. A laminin-binding region spans residues 242 to 295; the sequence is QPEVADWSEGVQVPSVPIQQFPTEDWSAQPSTEDWSAAPTAQATEWVGTTTEWS. The tract at residues 266 to 295 is disordered; the sequence is DWSAQPSTEDWSAAPTAQATEWVGTTTEWS.

The protein belongs to the universal ribosomal protein uS2 family. In terms of assembly, monomer (37LRP) and homodimer (67LR). Component of the small ribosomal subunit. Mature ribosomes consist of a small (40S) and a large (60S) subunit. The 40S subunit contains about 33 different proteins and 1 molecule of RNA (18S). The 60S subunit contains about 49 different proteins and 3 molecules of RNA (28S, 5.8S and 5S). Interacts with RPS21. Interacts with several laminins including at least LAMB1. Interacts with MDK. The mature dimeric form interacts with PPP1R16B (via its fourth ankyrin repeat). Interacts with PPP1CA only in the presence of PPP1R16B. Post-translationally, acylated. Acylation may be a prerequisite for conversion of the monomeric 37 kDa laminin receptor precursor (37LRP) to the mature dimeric 67 kDa laminin receptor (67LR), and may provide a mechanism for membrane association. In terms of processing, cleaved by stromelysin-3 (ST3) at the cell surface. Cleavage by stromelysin-3 may be a mechanism to alter cell-extracellular matrix interactions.

It localises to the cell membrane. It is found in the cytoplasm. The protein resides in the nucleus. Required for the assembly and/or stability of the 40S ribosomal subunit. Required for the processing of the 20S rRNA-precursor to mature 18S rRNA in a late step of the maturation of 40S ribosomal subunits. Also functions as a cell surface receptor for laminin. Plays a role in cell adhesion to the basement membrane and in the consequent activation of signaling transduction pathways. May play a role in cell fate determination and tissue morphogenesis. Also acts as a receptor for several other ligands, including the pathogenic prion protein, viruses, and bacteria. Acts as a PPP1R16B-dependent substrate of PPP1CA. The polypeptide is Small ribosomal subunit protein uS2 (Bos taurus (Bovine)).